We begin with the raw amino-acid sequence, 43 residues long: Thymosin beta-12 (43 aa).

Basic and acidic residues-rich tracts occupy residues 1–25 (MSDK…ETQE) and 33–43 (ETIEQEKQATA). The tract at residues 1–43 (MSDKPDLAEVSNFDKTKLKKTETQEKNPLPTKETIEQEKQATA) is disordered. Residue serine 2 is modified to N-acetylserine.

It belongs to the thymosin beta family.

The protein resides in the cytoplasm. It is found in the cytoskeleton. Functionally, plays an important role in the organization of the cytoskeleton. Binds to and sequesters actin monomers (G actin) and therefore inhibits actin polymerization. The polypeptide is Thymosin beta-12 (Oncorhynchus mykiss (Rainbow trout)).